Here is a 314-residue protein sequence, read N- to C-terminus: Malate dehydrogenase (314 aa).

Residues Gly11–Gly16 and Asp35 each bind NAD(+). Residues Arg84 and Arg90 each contribute to the substrate site. Residues Asn97 and Ile120 to Asn122 each bind NAD(+). Substrate-binding residues include Asn122 and Arg153. Residue His177 is the Proton acceptor of the active site.

It belongs to the LDH/MDH superfamily. MDH type 3 family.

The enzyme catalyses (S)-malate + NAD(+) = oxaloacetate + NADH + H(+). Catalyzes the reversible oxidation of malate to oxaloacetate. In Rickettsia felis (strain ATCC VR-1525 / URRWXCal2) (Rickettsia azadi), this protein is Malate dehydrogenase.